We begin with the raw amino-acid sequence, 465 residues long: Ribosomal oxygenase 2 (465 aa).

One can recognise a JmjC domain in the interval 139–271 (QPQRFKDELW…NSWGDFLLDT (133 aa)). Positions 179, 181, and 240 each coordinate Fe cation. Position 309 is a phosphoserine (Ser309).

This sequence belongs to the ROX family. MINA53 subfamily. Fe(2+) serves as cofactor. Expressed in liver, skeletal muscle, heart, pancreas, and placenta. Not detected in brain, lung or kidney. Expressed in several lung cancer tissues, but is barely detected in the adjacent non-cancerous tissues. Also highly expressed in several esophageal squamous cell carcinoma (ESCC), and colon cancer tissues, and in various cancer cell lines.

The protein localises to the nucleus. Its subcellular location is the nucleolus. It carries out the reaction L-histidyl-[protein] + 2-oxoglutarate + O2 = (3S)-3-hydroxy-L-histidyl-[protein] + succinate + CO2. The enzyme catalyses L-histidyl-[ribosomal protein uL15] + 2-oxoglutarate + O2 = (3S)-3-hydroxy-L-histidyl-[ribosomal protein uL15] + succinate + CO2. Its function is as follows. Oxygenase that can act as both a histone lysine demethylase and a ribosomal histidine hydroxylase. Is involved in the demethylation of trimethylated 'Lys-9' on histone H3 (H3K9me3), leading to an increase in ribosomal RNA expression. Also catalyzes the hydroxylation of 60S ribosomal protein L27a on 'His-39'. May play an important role in cell growth and survival. May be involved in ribosome biogenesis, most likely during the assembly process of pre-ribosomal particles. This chain is Ribosomal oxygenase 2, found in Homo sapiens (Human).